Here is an 87-residue protein sequence, read N- to C-terminus: Small ribosomal subunit protein uS15 (87 aa).

It belongs to the universal ribosomal protein uS15 family. Part of the 30S ribosomal subunit. Forms a bridge to the 50S subunit in the 70S ribosome, contacting the 23S rRNA.

Functionally, one of the primary rRNA binding proteins, it binds directly to 16S rRNA where it helps nucleate assembly of the platform of the 30S subunit by binding and bridging several RNA helices of the 16S rRNA. Its function is as follows. Forms an intersubunit bridge (bridge B4) with the 23S rRNA of the 50S subunit in the ribosome. The protein is Small ribosomal subunit protein uS15 of Dehalococcoides mccartyi (strain ATCC BAA-2100 / JCM 16839 / KCTC 5957 / BAV1).